The following is a 229-amino-acid chain: Triosephosphate isomerase (229 aa).

9-11 (NLK) is a binding site for substrate. The active-site Electrophile is H93. E141 functions as the Proton acceptor in the catalytic mechanism. Substrate is bound by residues I146, G181, and 202-203 (AS).

The protein belongs to the triosephosphate isomerase family. In terms of assembly, homotetramer; dimer of dimers.

The protein localises to the cytoplasm. It carries out the reaction D-glyceraldehyde 3-phosphate = dihydroxyacetone phosphate. It functions in the pathway carbohydrate biosynthesis; gluconeogenesis. It participates in carbohydrate degradation; glycolysis; D-glyceraldehyde 3-phosphate from glycerone phosphate: step 1/1. Functionally, involved in the gluconeogenesis. Catalyzes stereospecifically the conversion of dihydroxyacetone phosphate (DHAP) to D-glyceraldehyde-3-phosphate (G3P). The chain is Triosephosphate isomerase from Pyrobaculum islandicum (strain DSM 4184 / JCM 9189 / GEO3).